We begin with the raw amino-acid sequence, 316 residues long: Ornithine carbamoyltransferase (316 aa).

Carbamoyl phosphate is bound by residues Ser-57–Thr-60, Gln-84, Arg-108, and His-135–Gln-138. L-ornithine contacts are provided by residues Asn-166, Asp-230, and Ser-234–Met-235. Carbamoyl phosphate is bound by residues Cys-269–Leu-270 and Arg-297.

Belongs to the aspartate/ornithine carbamoyltransferase superfamily. OTCase family.

The protein localises to the cytoplasm. It carries out the reaction carbamoyl phosphate + L-ornithine = L-citrulline + phosphate + H(+). It participates in amino-acid biosynthesis; L-arginine biosynthesis; L-arginine from L-ornithine and carbamoyl phosphate: step 1/3. Functionally, reversibly catalyzes the transfer of the carbamoyl group from carbamoyl phosphate (CP) to the N(epsilon) atom of ornithine (ORN) to produce L-citrulline. The chain is Ornithine carbamoyltransferase from Bacillus thuringiensis subsp. konkukian (strain 97-27).